The sequence spans 318 residues: Ribosomal protein L11 methyltransferase (318 aa).

The S-adenosyl-L-methionine site is built by Thr-159, Gly-180, Asp-202, and Asn-253.

This sequence belongs to the methyltransferase superfamily. PrmA family.

Its subcellular location is the cytoplasm. It catalyses the reaction L-lysyl-[protein] + 3 S-adenosyl-L-methionine = N(6),N(6),N(6)-trimethyl-L-lysyl-[protein] + 3 S-adenosyl-L-homocysteine + 3 H(+). Functionally, methylates ribosomal protein L11. This Lachnospira eligens (strain ATCC 27750 / DSM 3376 / VPI C15-48 / C15-B4) (Eubacterium eligens) protein is Ribosomal protein L11 methyltransferase.